The chain runs to 134 residues: Putative STAG3-like protein 2 (134 aa).

One can recognise an SCD domain in the interval proline 10–methionine 95.

It belongs to the SCC3 family.

The protein resides in the nucleus. The protein is Putative STAG3-like protein 2 (STAG3L2) of Homo sapiens (Human).